We begin with the raw amino-acid sequence, 474 residues long: tRNA-2-methylthio-N(6)-dimethylallyladenosine synthase (474 aa).

The MTTase N-terminal domain occupies 3 to 120 (KKLHIKTWGC…LPEMINSVRG (118 aa)). [4Fe-4S] cluster-binding residues include Cys-12, Cys-49, Cys-83, Cys-157, Cys-161, and Cys-164. Positions 143-375 (RAEGPTAFVS…QERINQQAMA (233 aa)) constitute a Radical SAM core domain. The 64-residue stretch at 378 to 441 (RRMLGTTQRI…PNSLRGKVVR (64 aa)) folds into the TRAM domain.

The protein belongs to the methylthiotransferase family. MiaB subfamily. In terms of assembly, monomer. The cofactor is [4Fe-4S] cluster.

Its subcellular location is the cytoplasm. The enzyme catalyses N(6)-dimethylallyladenosine(37) in tRNA + (sulfur carrier)-SH + AH2 + 2 S-adenosyl-L-methionine = 2-methylsulfanyl-N(6)-dimethylallyladenosine(37) in tRNA + (sulfur carrier)-H + 5'-deoxyadenosine + L-methionine + A + S-adenosyl-L-homocysteine + 2 H(+). Its function is as follows. Catalyzes the methylthiolation of N6-(dimethylallyl)adenosine (i(6)A), leading to the formation of 2-methylthio-N6-(dimethylallyl)adenosine (ms(2)i(6)A) at position 37 in tRNAs that read codons beginning with uridine. In Salmonella paratyphi A (strain ATCC 9150 / SARB42), this protein is tRNA-2-methylthio-N(6)-dimethylallyladenosine synthase.